We begin with the raw amino-acid sequence, 63 residues long: Large ribosomal subunit protein bL28 (63 aa).

The protein belongs to the bacterial ribosomal protein bL28 family.

The chain is Large ribosomal subunit protein bL28 from Desulfosudis oleivorans (strain DSM 6200 / JCM 39069 / Hxd3) (Desulfococcus oleovorans).